A 126-amino-acid chain; its full sequence is 5-carboxymethyl-2-hydroxymuconate Delta-isomerase (126 aa).

Residue P2 is the Proton acceptor; via imino nitrogen of the active site.

As to quaternary structure, homotrimer.

The catalysed reaction is (2E,4Z)-5-hydroxypenta-2,4-diene-1,2,5-tricarboxylate = (3E,5R)-5-carboxy-2-oxohept-3-enedioate. It participates in aromatic compound metabolism; 4-hydroxyphenylacetate degradation; pyruvate and succinate semialdehyde from 4-hydroxyphenylacetate: step 4/7. In terms of biological role, transforms 5-carboxymethyl-2-hydroxy-muconic acid (CHM) into 5-oxo-pent-3-ene-1,2,5-tricarboxylic acid (OPET). The sequence is that of 5-carboxymethyl-2-hydroxymuconate Delta-isomerase (hpcD) from Escherichia coli.